Here is a 206-residue protein sequence, read N- to C-terminus: Holliday junction branch migration complex subunit RuvA (206 aa).

The segment at 1–67 (MIASIFGKIT…QILEEGFAFN (67 aa)) is domain I. The domain II stretch occupies residues 68-141 (TLEEKEWFSK…YDRDDGGKRI (74 aa)). The flexible linker stretch occupies residues 141–145 (IKPNT). Positions 146-206 (AMANDYDEMF…QNNEVTNKTA (61 aa)) are domain III.

It belongs to the RuvA family. As to quaternary structure, homotetramer. Forms an RuvA(8)-RuvB(12)-Holliday junction (HJ) complex. HJ DNA is sandwiched between 2 RuvA tetramers; dsDNA enters through RuvA and exits via RuvB. An RuvB hexamer assembles on each DNA strand where it exits the tetramer. Each RuvB hexamer is contacted by two RuvA subunits (via domain III) on 2 adjacent RuvB subunits; this complex drives branch migration. In the full resolvosome a probable DNA-RuvA(4)-RuvB(12)-RuvC(2) complex forms which resolves the HJ.

Its subcellular location is the cytoplasm. The RuvA-RuvB-RuvC complex processes Holliday junction (HJ) DNA during genetic recombination and DNA repair, while the RuvA-RuvB complex plays an important role in the rescue of blocked DNA replication forks via replication fork reversal (RFR). RuvA specifically binds to HJ cruciform DNA, conferring on it an open structure. The RuvB hexamer acts as an ATP-dependent pump, pulling dsDNA into and through the RuvAB complex. HJ branch migration allows RuvC to scan DNA until it finds its consensus sequence, where it cleaves and resolves the cruciform DNA. This chain is Holliday junction branch migration complex subunit RuvA, found in Mycoplasma pneumoniae (strain ATCC 29342 / M129 / Subtype 1) (Mycoplasmoides pneumoniae).